Consider the following 315-residue polypeptide: Methionyl-tRNA formyltransferase (315 aa).

110 to 113 is a binding site for (6S)-5,6,7,8-tetrahydrofolate; it reads SLLP.

The protein belongs to the Fmt family.

It carries out the reaction L-methionyl-tRNA(fMet) + (6R)-10-formyltetrahydrofolate = N-formyl-L-methionyl-tRNA(fMet) + (6S)-5,6,7,8-tetrahydrofolate + H(+). Its function is as follows. Attaches a formyl group to the free amino group of methionyl-tRNA(fMet). The formyl group appears to play a dual role in the initiator identity of N-formylmethionyl-tRNA by promoting its recognition by IF2 and preventing the misappropriation of this tRNA by the elongation apparatus. The protein is Methionyl-tRNA formyltransferase of Lactobacillus delbrueckii subsp. bulgaricus (strain ATCC BAA-365 / Lb-18).